Here is a 506-residue protein sequence, read N- to C-terminus: Proline--tRNA ligase (506 aa).

This sequence belongs to the class-II aminoacyl-tRNA synthetase family. ProS type 3 subfamily. As to quaternary structure, homodimer.

Its subcellular location is the cytoplasm. It catalyses the reaction tRNA(Pro) + L-proline + ATP = L-prolyl-tRNA(Pro) + AMP + diphosphate. Its function is as follows. Catalyzes the attachment of proline to tRNA(Pro) in a two-step reaction: proline is first activated by ATP to form Pro-AMP and then transferred to the acceptor end of tRNA(Pro). The polypeptide is Proline--tRNA ligase (Akkermansia muciniphila (strain ATCC BAA-835 / DSM 22959 / JCM 33894 / BCRC 81048 / CCUG 64013 / CIP 107961 / Muc)).